The following is a 215-amino-acid chain: MASMRTAAAAAMLACIAVVLASTAADGALLPWFGGGGARDEAVPELGLLAAADPFRILEHVPFGFDRDDVAMLSMARVDWRETGDAHEVVVDVPGMRKEDLRVEVEDNRVLRISGERRREETTEQKGGGDHWHREERSYGRFWRQLRLPDNADLDSIAASLDNGVLTVRFRKLAPDQIKGPRVVGIASAGGDDGGKKSIGGAGEGQNQQAKKVEL.

Residues methionine 1–glycine 27 form the signal peptide. Positions aspartate 69–alanine 189 constitute a sHSP domain. A disordered region spans residues valine 183–leucine 215. Residues glycine 205–leucine 215 are compositionally biased toward polar residues.

Belongs to the small heat shock protein (HSP20) family. May form oligomeric structures.

It localises to the endoplasmic reticulum. The polypeptide is 23.2 kDa heat shock protein (HSP23.2) (Oryza sativa subsp. japonica (Rice)).